We begin with the raw amino-acid sequence, 346 residues long: NADH-ubiquinone oxidoreductase chain 2 (346 aa).

A run of 11 helical transmembrane segments spans residues P3–S23, H25–M45, Y59–M79, I96–P116, I122–L142, I149–G169, I178–P198, L200–I220, T242–P262, S274–M294, and I322–L342.

Belongs to the complex I subunit 2 family. Core subunit of respiratory chain NADH dehydrogenase (Complex I) which is composed of 45 different subunits. Interacts with TMEM242.

The protein localises to the mitochondrion inner membrane. It carries out the reaction a ubiquinone + NADH + 5 H(+)(in) = a ubiquinol + NAD(+) + 4 H(+)(out). Core subunit of the mitochondrial membrane respiratory chain NADH dehydrogenase (Complex I) which catalyzes electron transfer from NADH through the respiratory chain, using ubiquinone as an electron acceptor. Essential for the catalytic activity and assembly of complex I. This chain is NADH-ubiquinone oxidoreductase chain 2, found in Equus caballus (Horse).